The sequence spans 239 residues: 4-hydroxy-tetrahydrodipicolinate reductase (239 aa).

NAD(+) contacts are provided by residues aspartate 32, 73–75 (GTT), and 98–101 (ASNF). Histidine 133 functions as the Proton donor/acceptor in the catalytic mechanism. Position 134 (histidine 134) interacts with (S)-2,3,4,5-tetrahydrodipicolinate. The active-site Proton donor is lysine 137. (S)-2,3,4,5-tetrahydrodipicolinate is bound at residue 143–144 (GT).

It belongs to the DapB family.

It localises to the cytoplasm. It catalyses the reaction (S)-2,3,4,5-tetrahydrodipicolinate + NAD(+) + H2O = (2S,4S)-4-hydroxy-2,3,4,5-tetrahydrodipicolinate + NADH + H(+). The enzyme catalyses (S)-2,3,4,5-tetrahydrodipicolinate + NADP(+) + H2O = (2S,4S)-4-hydroxy-2,3,4,5-tetrahydrodipicolinate + NADPH + H(+). It functions in the pathway amino-acid biosynthesis; L-lysine biosynthesis via DAP pathway; (S)-tetrahydrodipicolinate from L-aspartate: step 4/4. In terms of biological role, catalyzes the conversion of 4-hydroxy-tetrahydrodipicolinate (HTPA) to tetrahydrodipicolinate. This is 4-hydroxy-tetrahydrodipicolinate reductase from Christiangramia forsetii (strain DSM 17595 / CGMCC 1.15422 / KT0803) (Gramella forsetii).